We begin with the raw amino-acid sequence, 357 residues long: Acyl-coenzyme A diphosphatase NUDT19 (357 aa).

Residues 10–242 form the Nudix hydrolase domain; the sequence is AATVMLAAGW…IWLAPPQFYE (233 aa). Positions 72–94 are disordered; sequence PRFGLGPEPPRQPPFPGLSHGDA. Pro residues predominate over residues 78-87; that stretch reads PEPPRQPPFP. Positions 97 to 118 match the Nudix box motif; it reads AALPDDVALRICAIRETFEEAG. Residues Glu112 and Glu116 each contribute to the Mg(2+) site. Lys300 carries the N6-succinyllysine modification. The short motif at 355–357 is the Microbody targeting signal element; that stretch reads AHL.

It belongs to the Nudix hydrolase family. In terms of assembly, monomer. It depends on Mg(2+) as a cofactor. Mn(2+) is required as a cofactor.

It is found in the peroxisome. It carries out the reaction an acyl-CoA + H2O = an acyl-4'-phosphopantetheine + adenosine 3',5'-bisphosphate + 2 H(+). The enzyme catalyses CoA + H2O = (R)-4'-phosphopantetheine + adenosine 3',5'-bisphosphate + 2 H(+). The catalysed reaction is hexanoyl-CoA + H2O = hexanoyl-4'-phosphopantetheine + adenosine 3',5'-bisphosphate + 2 H(+). It catalyses the reaction octanoyl-CoA + H2O = S-octanoyl-4'-phosphopantetheine + adenosine 3',5'-bisphosphate + 2 H(+). It carries out the reaction butanoyl-CoA + H2O = S-butanoyl-4'-phosphopantetheine + adenosine 3',5'-bisphosphate + 2 H(+). The enzyme catalyses propanoyl-CoA + H2O = propanoyl-4'-phosphopantetheine + adenosine 3',5'-bisphosphate + 2 H(+). The catalysed reaction is malonyl-CoA + H2O = malonyl-4'-phosphopantetheine + adenosine 3',5'-bisphosphate + 2 H(+). It catalyses the reaction succinyl-CoA + H2O = succinyl-4'-phosphopantetheine + adenosine 3',5'-bisphosphate + 2 H(+). It carries out the reaction choloyl-CoA + H2O = S-choloyl-4'-phosphopantetheine + adenosine 3',5'-bisphosphate + 2 H(+). The enzyme catalyses 4,8-dimethylnonanoyl-CoA + H2O = S-(4,8-dimethylnonanoyl)-4'-phosphopantetheine + adenosine 3',5'-bisphosphate + 2 H(+). The catalysed reaction is (9Z,12Z,15Z)-octadecatrienoyl-CoA + H2O = S-(9Z,12Z,15Z-octadecatrienoyl)-4'-phosphopantetheine + adenosine 3',5'-bisphosphate + 2 H(+). It catalyses the reaction (9Z,12Z)-octadecadienoyl-CoA + H2O = S-(9Z,12Z-octadecadienoyl)-4'-phosphopantetheine + adenosine 3',5'-bisphosphate + 2 H(+). It carries out the reaction (9Z)-hexadecenoyl-CoA + H2O = S-(9Z-hexadecenoyl)-4'-phosphopantetheine + adenosine 3',5'-bisphosphate + 2 H(+). The enzyme catalyses (9Z)-tetradecenoyl-CoA + H2O = S-(9Z-tetradecenoyl)-4'-phosphopantetheine + adenosine 3',5'-bisphosphate + 2 H(+). The catalysed reaction is (6Z)-octenoyl-CoA + H2O = S-(6Z-octenoyl)-4'-phosphopantetheine + adenosine 3',5'-bisphosphate + 2 H(+). It catalyses the reaction hexadecanoyl-CoA + H2O = S-hexadecanoyl-4'-phosphopantetheine + adenosine 3',5'-bisphosphate + 2 H(+). It carries out the reaction tetradecanoyl-CoA + H2O = tetradecanoyl-4'-phosphopantetheine + adenosine 3',5'-bisphosphate + 2 H(+). The enzyme catalyses dodecanoyl-CoA + H2O = S-dodecanoyl-4'-phosphopantetheine + adenosine 3',5'-bisphosphate + 2 H(+). The catalysed reaction is a 5'-end CoA-ribonucleoside in mRNA + H2O = a 5'-end phospho-adenosine-phospho-ribonucleoside in mRNA + (R)-4'-phosphopantetheine + 2 H(+). Fatty acyl-coenzyme A (CoA) diphosphatase that hydrolyzes fatty acyl-CoA to yield acyl-4'-phosphopantetheine and adenosine 3',5'-bisphosphate. Mediates the hydrolysis of a wide range of CoA esters, including choloyl-CoA and branched-chain fatty-acyl-CoA esters and at low substrate concentrations medium and long-chain fatty-acyl-CoA esters are the primary substrates. Highest activity seen with medium-chain acyl-CoA esters and higher rates of activity seen with the unsaturated acyl-CoA esters compared with the saturated esters. Exhibits decapping activity towards dpCoA-capped RNAs in vitro. The polypeptide is Acyl-coenzyme A diphosphatase NUDT19 (Nudt19) (Mus caroli (Ryukyu mouse)).